Reading from the N-terminus, the 161-residue chain is Regulator of ribonuclease activity A (161 aa).

This sequence belongs to the RraA family. As to quaternary structure, homotrimer. Binds to both RNA-binding sites in the C-terminal region of Rne and to RhlB.

The protein localises to the cytoplasm. Its function is as follows. Globally modulates RNA abundance by binding to RNase E (Rne) and regulating its endonucleolytic activity. Can modulate Rne action in a substrate-dependent manner by altering the composition of the degradosome. Modulates RNA-binding and helicase activities of the degradosome. This chain is Regulator of ribonuclease activity A, found in Cronobacter sakazakii (strain ATCC BAA-894) (Enterobacter sakazakii).